A 110-amino-acid polypeptide reads, in one-letter code: Ig kappa chain V region 2717 (110 aa).

Positions 1-23 (VEVLTQTPSPVSAAVGGTVTISC) are framework-1. The tract at residues 24 to 36 (QSTKSIYBBBYLA) is complementarity-determining-1. The interval 37–51 (WYQZKPGQPPKALIY) is framework-2. Residues 52–58 (TASSLAS) are complementarity-determining-2. Residues 59 to 90 (GVPSRFTGSGSGTZFTLTLSDVZCDDAATYYC) form a framework-3 region. Positions 91–99 (GGADYTGYS) are complementarity-determining-3. Positions 100–109 (FGGGTEVVVK) are framework-4.

The chain is Ig kappa chain V region 2717 from Oryctolagus cuniculus (Rabbit).